A 436-amino-acid polypeptide reads, in one-letter code: Sulfopropanediol 3-dehydrogenase (436 aa).

Residues Tyr-118, Gln-180, and Asn-203 each contribute to the NAD(+) site. Residues Gln-248 and His-251 each coordinate Zn(2+). Active-site proton acceptor residues include Glu-318 and His-319. Zn(2+)-binding residues include Asp-352 and His-411.

The protein belongs to the histidinol dehydrogenase family. HpsN subfamily. Zn(2+) is required as a cofactor.

The enzyme catalyses (2R)-3-sulfopropanediol + 2 NAD(+) + H2O = (2R)-3-sulfolactate + 2 NADH + 3 H(+). In terms of biological role, catalyzes the NAD-dependent oxidation of (R)-2,3-dihydroxypropane-1-sulfonate to (R)-3-sulfolactate. The polypeptide is Sulfopropanediol 3-dehydrogenase (Cupriavidus pinatubonensis (strain JMP 134 / LMG 1197) (Cupriavidus necator (strain JMP 134))).